We begin with the raw amino-acid sequence, 189 residues long: Glycerol-3-phosphate acyltransferase 1 (189 aa).

The next 5 helical transmembrane spans lie at 12–32 (MQFL…AYIV), 61–81 (GYFV…VSIA), 88–108 (FTFV…PMLF), 124–144 (IAFD…FYLI), and 164–184 (ILYS…VLIL).

This sequence belongs to the PlsY family. In terms of assembly, probably interacts with PlsX.

It is found in the cell membrane. It carries out the reaction an acyl phosphate + sn-glycerol 3-phosphate = a 1-acyl-sn-glycero-3-phosphate + phosphate. It participates in lipid metabolism; phospholipid metabolism. In terms of biological role, catalyzes the transfer of an acyl group from acyl-phosphate (acyl-PO(4)) to glycerol-3-phosphate (G3P) to form lysophosphatidic acid (LPA). This enzyme utilizes acyl-phosphate as fatty acyl donor, but not acyl-CoA or acyl-ACP. The sequence is that of Glycerol-3-phosphate acyltransferase 1 from Bacillus anthracis.